Consider the following 221-residue polypeptide: Phosphoribosylformylglycinamidine synthase subunit PurQ (221 aa).

The 216-residue stretch at 6–221 folds into the Glutamine amidotransferase type-1 domain; sequence VGVVVFPGSN…LFTLKSLILK (216 aa). Cys-89 acts as the Nucleophile in catalysis. Active-site residues include His-197 and Glu-199.

As to quaternary structure, part of the FGAM synthase complex composed of 1 PurL, 1 PurQ and 2 PurS subunits.

The protein resides in the cytoplasm. It carries out the reaction N(2)-formyl-N(1)-(5-phospho-beta-D-ribosyl)glycinamide + L-glutamine + ATP + H2O = 2-formamido-N(1)-(5-O-phospho-beta-D-ribosyl)acetamidine + L-glutamate + ADP + phosphate + H(+). It catalyses the reaction L-glutamine + H2O = L-glutamate + NH4(+). It functions in the pathway purine metabolism; IMP biosynthesis via de novo pathway; 5-amino-1-(5-phospho-D-ribosyl)imidazole from N(2)-formyl-N(1)-(5-phospho-D-ribosyl)glycinamide: step 1/2. Its function is as follows. Part of the phosphoribosylformylglycinamidine synthase complex involved in the purines biosynthetic pathway. Catalyzes the ATP-dependent conversion of formylglycinamide ribonucleotide (FGAR) and glutamine to yield formylglycinamidine ribonucleotide (FGAM) and glutamate. The FGAM synthase complex is composed of three subunits. PurQ produces an ammonia molecule by converting glutamine to glutamate. PurL transfers the ammonia molecule to FGAR to form FGAM in an ATP-dependent manner. PurS interacts with PurQ and PurL and is thought to assist in the transfer of the ammonia molecule from PurQ to PurL. In Prochlorococcus marinus (strain MIT 9312), this protein is Phosphoribosylformylglycinamidine synthase subunit PurQ.